Reading from the N-terminus, the 134-residue chain is Protein Turandot E (134 aa).

Positions 1 to 38 are cleaved as a signal peptide; sequence MSNTRTVHSSTSISKMNSALQISCLLVVLGCLLGSGHC.

This sequence belongs to the Turandot family.

It localises to the secreted. Functionally, a humoral factor that may play a role in stress tolerance. The protein is Protein Turandot E of Drosophila melanogaster (Fruit fly).